Here is a 437-residue protein sequence, read N- to C-terminus: Protein translocase subunit SecY (437 aa).

The next 10 membrane-spanning stretches (helical) occupy residues leucine 19–valine 39, leucine 69–leucine 89, valine 122–phenylalanine 142, isoleucine 157–leucine 177, glycine 189–isoleucine 209, tryptophan 219–valine 239, glycine 275–phenylalanine 295, histidine 318–phenylalanine 338, glycine 378–alanine 398, and glutamine 400–valine 420.

It belongs to the SecY/SEC61-alpha family. In terms of assembly, component of the Sec protein translocase complex. Heterotrimer consisting of SecY, SecE and SecG subunits. The heterotrimers can form oligomers, although 1 heterotrimer is thought to be able to translocate proteins. Interacts with the ribosome. Interacts with SecDF, and other proteins may be involved. Interacts with SecA.

It localises to the cell membrane. Its function is as follows. The central subunit of the protein translocation channel SecYEG. Consists of two halves formed by TMs 1-5 and 6-10. These two domains form a lateral gate at the front which open onto the bilayer between TMs 2 and 7, and are clamped together by SecE at the back. The channel is closed by both a pore ring composed of hydrophobic SecY resides and a short helix (helix 2A) on the extracellular side of the membrane which forms a plug. The plug probably moves laterally to allow the channel to open. The ring and the pore may move independently. In Streptomyces coelicolor (strain ATCC BAA-471 / A3(2) / M145), this protein is Protein translocase subunit SecY.